The following is a 298-amino-acid chain: Factor-induced gene 1 protein (298 aa).

The next 4 membrane-spanning stretches (helical) occupy residues 17-37 (IFALAFNLISIFLLIFLLIGC), 163-183 (VLMATVILTILMFLFILYVTV), 195-215 (FLLLLSSTIVLTWGIGAMWTH), and 243-263 (VMAWFSFAFLLLDSVVLWLIF). Ser288 bears the Phosphoserine mark. Thr293 carries the post-translational modification Phosphothreonine. Ser296 is subject to Phosphoserine.

Its subcellular location is the membrane. Its function is as follows. Required for efficient mating. This chain is Factor-induced gene 1 protein (FIG1), found in Saccharomyces cerevisiae (strain ATCC 204508 / S288c) (Baker's yeast).